The primary structure comprises 295 residues: Foldase protein PrsA (295 aa).

The signal sequence occupies residues 1–19 (MKKVLIGFASIAMAFTLAA). The N-palmitoyl cysteine moiety is linked to residue cysteine 20. The S-diacylglycerol cysteine moiety is linked to residue cysteine 20. A PpiC domain is found at 136-229 (EPKVTVAQIL…YGYQVIKMIN (94 aa)).

The protein belongs to the PrsA family.

The protein localises to the cell membrane. The catalysed reaction is [protein]-peptidylproline (omega=180) = [protein]-peptidylproline (omega=0). Plays a major role in protein secretion by helping the post-translocational extracellular folding of several secreted proteins. The protein is Foldase protein PrsA of Pediococcus pentosaceus (strain ATCC 25745 / CCUG 21536 / LMG 10740 / 183-1w).